The primary structure comprises 490 residues: Probable cytochrome P450 518B1 (490 aa).

The chain crosses the membrane as a helical span at residues 2 to 22 (LTNIIILIILYLFYDFCYKNF). Position 437 (C437) interacts with heme.

Belongs to the cytochrome P450 family. Requires heme as cofactor.

Its subcellular location is the membrane. The chain is Probable cytochrome P450 518B1 (cyp518B1) from Dictyostelium discoideum (Social amoeba).